A 389-amino-acid polypeptide reads, in one-letter code: uncharacterized protein (389 aa).

WD repeat units follow at residues Ser-11–Lys-53, Ser-146–Ala-186, and Ala-289–Pro-330. A Phosphoserine modification is found at Ser-351. A disordered region spans residues Gln-361–Tyr-389. The segment covering Arg-368–Tyr-389 has biased composition (basic residues).

This is an uncharacterized protein from Saccharomyces cerevisiae (strain ATCC 204508 / S288c) (Baker's yeast).